Here is a 521-residue protein sequence, read N- to C-terminus: MAP kinase-activated protein kinase mak-1 (521 aa).

Positions 1–12 (MMFEYEEDEDPM) are enriched in acidic residues. A disordered region spans residues 1–36 (MMFEYEEDEDPMEQQKHEEFKHHSTDHSGSPQENPF). A compositionally biased stretch (basic and acidic residues) spans 13–26 (EQQKHEEFKHHSTD). The Protein kinase domain maps to 144-405 (TISAEIIGIG…IHELMATPLV (262 aa)). ATP contacts are provided by residues 150–158 (IGIGESGKV) and Lys173. The active-site Proton acceptor is the Asp266.

This sequence belongs to the protein kinase superfamily. CAMK Ser/Thr protein kinase family. May interact (via protein kinase domain) with unc-22 (via protein kinase and CRD domains). Mg(2+) is required as a cofactor. Post-translationally, autophosphorylated in vitro. In terms of tissue distribution, expressed in body wall muscles (at protein level). Expressed in intestine.

The protein resides in the cytoplasm. Its subcellular location is the myofibril. It is found in the sarcomere. The protein localises to the a band. The catalysed reaction is L-seryl-[protein] + ATP = O-phospho-L-seryl-[protein] + ADP + H(+). The enzyme catalyses L-threonyl-[protein] + ATP = O-phospho-L-threonyl-[protein] + ADP + H(+). In terms of biological role, serine/threonine-protein kinase which may play a role in body wall muscle contraction. May phosphorylate unc-22/twitchin. In Caenorhabditis elegans, this protein is MAP kinase-activated protein kinase mak-1.